Here is a 189-residue protein sequence, read N- to C-terminus: Peptidyl-tRNA hydrolase (189 aa).

Y15 serves as a coordination point for tRNA. Residue H20 is the Proton acceptor of the active site. TRNA contacts are provided by F66, N68, and N114.

It belongs to the PTH family. In terms of assembly, monomer.

It is found in the cytoplasm. It catalyses the reaction an N-acyl-L-alpha-aminoacyl-tRNA + H2O = an N-acyl-L-amino acid + a tRNA + H(+). In terms of biological role, hydrolyzes ribosome-free peptidyl-tRNAs (with 1 or more amino acids incorporated), which drop off the ribosome during protein synthesis, or as a result of ribosome stalling. Its function is as follows. Catalyzes the release of premature peptidyl moieties from peptidyl-tRNA molecules trapped in stalled 50S ribosomal subunits, and thus maintains levels of free tRNAs and 50S ribosomes. This is Peptidyl-tRNA hydrolase from Streptococcus pneumoniae (strain P1031).